Reading from the N-terminus, the 228-residue chain is MYSIKMRASHEDIHISGAETMCEFEDLENYLKKYFNKAFNHENGNIDFLNLKIEKVKAPIQTLVALPVVENLNDTLTQLAKQTGVSEYALNKGLEFIKNDITYTGAIILSAQTGQRLDSTEQRGIRVTQLAFKTCKCNGEISERVKDARALATCINAFEGVKAELCVSDDLHYTTGYFASPKLGYRRIFNIKEKGTRHGGRIIFVDEGINLNAYVSFLETVPKEIIEK.

This sequence belongs to the BioW family. In terms of assembly, homodimer. Requires Mg(2+) as cofactor.

The catalysed reaction is heptanedioate + ATP + CoA = 6-carboxyhexanoyl-CoA + AMP + diphosphate. It functions in the pathway metabolic intermediate metabolism; pimeloyl-CoA biosynthesis; pimeloyl-CoA from pimelate: step 1/1. Functionally, catalyzes the transformation of pimelate into pimeloyl-CoA with concomitant hydrolysis of ATP to AMP. The protein is 6-carboxyhexanoate--CoA ligase of Staphylococcus epidermidis (strain ATCC 35984 / DSM 28319 / BCRC 17069 / CCUG 31568 / BM 3577 / RP62A).